Consider the following 566-residue polypeptide: Urease subunit alpha (566 aa).

In terms of domain architecture, Urease spans 128 to 566; sequence GGVDTHIHFI…LPMAQRYFLF (439 aa). The Ni(2+) site is built by His133, His135, and Lys216. Lys216 carries the post-translational modification N6-carboxylysine. His218 lines the substrate pocket. Residues His245 and His271 each coordinate Ni(2+). The active-site Proton donor is His319. A Ni(2+)-binding site is contributed by Asp359.

This sequence belongs to the metallo-dependent hydrolases superfamily. Urease alpha subunit family. As to quaternary structure, may form a heterohexamer of 3 UreC (alpha) and 3 UreAB (gamma/beta) subunits. May also form a heterotrimer of UreA (gamma), UreB (beta) and UreC (alpha) subunits. Three heterotrimers associate to form the active enzyme. Ni cation serves as cofactor. Post-translationally, carboxylation allows a single lysine to coordinate two nickel ions.

It is found in the cytoplasm. It carries out the reaction urea + 2 H2O + H(+) = hydrogencarbonate + 2 NH4(+). The protein operates within nitrogen metabolism; urea degradation; CO(2) and NH(3) from urea (urease route): step 1/1. This chain is Urease subunit alpha, found in Pseudomonas savastanoi pv. phaseolicola (strain 1448A / Race 6) (Pseudomonas syringae pv. phaseolicola (strain 1448A / Race 6)).